The following is a 150-amino-acid chain: D-aminoacyl-tRNA deacylase (150 aa).

The short motif at 138 to 139 is the Gly-cisPro motif, important for rejection of L-amino acids element; sequence GP.

It belongs to the DTD family. In terms of assembly, homodimer.

Its subcellular location is the cytoplasm. It catalyses the reaction glycyl-tRNA(Ala) + H2O = tRNA(Ala) + glycine + H(+). It carries out the reaction a D-aminoacyl-tRNA + H2O = a tRNA + a D-alpha-amino acid + H(+). An aminoacyl-tRNA editing enzyme that deacylates mischarged D-aminoacyl-tRNAs. Also deacylates mischarged glycyl-tRNA(Ala), protecting cells against glycine mischarging by AlaRS. Acts via tRNA-based rather than protein-based catalysis; rejects L-amino acids rather than detecting D-amino acids in the active site. By recycling D-aminoacyl-tRNA to D-amino acids and free tRNA molecules, this enzyme counteracts the toxicity associated with the formation of D-aminoacyl-tRNA entities in vivo and helps enforce protein L-homochirality. The polypeptide is D-aminoacyl-tRNA deacylase (Flavobacterium johnsoniae (strain ATCC 17061 / DSM 2064 / JCM 8514 / BCRC 14874 / CCUG 350202 / NBRC 14942 / NCIMB 11054 / UW101) (Cytophaga johnsonae)).